Reading from the N-terminus, the 460-residue chain is Exodeoxyribonuclease 7 large subunit (460 aa).

A disordered region spans residues Ala-438–Asp-460. The segment covering Arg-439 to Gln-450 has biased composition (basic and acidic residues). The segment covering Ser-451 to Asp-460 has biased composition (polar residues).

Belongs to the XseA family. In terms of assembly, heterooligomer composed of large and small subunits.

The protein resides in the cytoplasm. It carries out the reaction Exonucleolytic cleavage in either 5'- to 3'- or 3'- to 5'-direction to yield nucleoside 5'-phosphates.. Bidirectionally degrades single-stranded DNA into large acid-insoluble oligonucleotides, which are then degraded further into small acid-soluble oligonucleotides. The protein is Exodeoxyribonuclease 7 large subunit of Brevibacillus brevis (strain 47 / JCM 6285 / NBRC 100599).